The chain runs to 303 residues: Zinc import ATP-binding protein ZnuC (303 aa).

Residues 17–232 (VSLENVGVLR…PEYVRLFGSR (216 aa)) form the ABC transporter domain. 49 to 56 (GPNGSGKS) lines the ATP pocket. The segment at 263–303 (DHCHPDDGHHAHEHGHAGHEHDHDHPDHAHPHAHEAGERHA) is disordered.

Belongs to the ABC transporter superfamily. Zinc importer (TC 3.A.1.15.5) family. In terms of assembly, the complex is composed of two ATP-binding proteins (ZnuC), two transmembrane proteins (ZnuB) and a solute-binding protein (ZnuA).

Its subcellular location is the cell inner membrane. It catalyses the reaction Zn(2+)(out) + ATP(in) + H2O(in) = Zn(2+)(in) + ADP(in) + phosphate(in) + H(+)(in). Its function is as follows. Part of the ABC transporter complex ZnuABC involved in zinc import. Responsible for energy coupling to the transport system. This is Zinc import ATP-binding protein ZnuC from Rhizobium johnstonii (strain DSM 114642 / LMG 32736 / 3841) (Rhizobium leguminosarum bv. viciae).